We begin with the raw amino-acid sequence, 186 residues long: Adenine phosphoribosyltransferase (186 aa).

This sequence belongs to the purine/pyrimidine phosphoribosyltransferase family. As to quaternary structure, homodimer.

Its subcellular location is the cytoplasm. The catalysed reaction is AMP + diphosphate = 5-phospho-alpha-D-ribose 1-diphosphate + adenine. It functions in the pathway purine metabolism; AMP biosynthesis via salvage pathway; AMP from adenine: step 1/1. In terms of biological role, catalyzes a salvage reaction resulting in the formation of AMP, that is energically less costly than de novo synthesis. The protein is Adenine phosphoribosyltransferase of Xanthomonas campestris pv. campestris (strain B100).